A 343-amino-acid polypeptide reads, in one-letter code: Protein RecA (343 aa).

66–73 (GPESSGKT) provides a ligand contact to ATP.

The protein belongs to the RecA family.

It is found in the cytoplasm. In terms of biological role, can catalyze the hydrolysis of ATP in the presence of single-stranded DNA, the ATP-dependent uptake of single-stranded DNA by duplex DNA, and the ATP-dependent hybridization of homologous single-stranded DNAs. It interacts with LexA causing its activation and leading to its autocatalytic cleavage. The protein is Protein RecA of Dechloromonas aromatica (strain RCB).